Here is a 144-residue protein sequence, read N- to C-terminus: L-fucose mutarotase (144 aa).

Catalysis depends on His-22, which acts as the Proton donor. Substrate-binding positions include Asp-30, Arg-109, and Tyr-131–Asn-133.

Belongs to the RbsD / FucU family. FucU mutarotase subfamily. Homodecamer.

It localises to the cytoplasm. The catalysed reaction is alpha-L-fucose = beta-L-fucose. It participates in carbohydrate metabolism; L-fucose metabolism. Its function is as follows. Involved in the anomeric conversion of L-fucose. This chain is L-fucose mutarotase, found in Actinobacillus pleuropneumoniae serotype 5b (strain L20).